A 463-amino-acid polypeptide reads, in one-letter code: Argininosuccinate lyase (463 aa).

The protein belongs to the lyase 1 family. Argininosuccinate lyase subfamily.

It localises to the cytoplasm. The catalysed reaction is 2-(N(omega)-L-arginino)succinate = fumarate + L-arginine. Its pathway is amino-acid biosynthesis; L-arginine biosynthesis; L-arginine from L-ornithine and carbamoyl phosphate: step 3/3. In Chlorobaculum parvum (strain DSM 263 / NCIMB 8327) (Chlorobium vibrioforme subsp. thiosulfatophilum), this protein is Argininosuccinate lyase.